A 99-amino-acid chain; its full sequence is Signal recognition particle 19 kDa protein (99 aa).

Belongs to the SRP19 family. In terms of assembly, part of the signal recognition particle protein translocation system, which is composed of SRP and FtsY. Archaeal SRP consists of a 7S RNA molecule of 300 nucleotides and two protein subunits: SRP54 and SRP19.

Its subcellular location is the cytoplasm. Its function is as follows. Involved in targeting and insertion of nascent membrane proteins into the cytoplasmic membrane. Binds directly to 7S RNA and mediates binding of the 54 kDa subunit of the SRP. This is Signal recognition particle 19 kDa protein from Pyrococcus horikoshii (strain ATCC 700860 / DSM 12428 / JCM 9974 / NBRC 100139 / OT-3).